The primary structure comprises 882 residues: Isoamylase 2, chloroplastic (882 aa).

Residues M1 to C70 constitute a chloroplast transit peptide.

It belongs to the glycosyl hydrolase 13 family. As to quaternary structure, associates with ISA1 to form the heteromultimeric complex Iso1 required for amylopectin synthesis.

It is found in the plastid. The protein localises to the chloroplast. It functions in the pathway glycan biosynthesis; starch biosynthesis. Functionally, involved in the trimming of pre-amylopectin chains. Accelerates the crystallization of nascent amylopectin molecules during starch synthesis. ISA1 and ISA2 work exclusively together as a multimeric holoenzyme. ISA1-ISA2 removes preferentially branches that are very close to other branches. The polypeptide is Isoamylase 2, chloroplastic (ISA2) (Arabidopsis thaliana (Mouse-ear cress)).